The chain runs to 197 residues: Rac-like GTP-binding protein ARAC1 (197 aa).

13-20 (GDGAVGKT) lines the GTP pocket. Positions 35–43 (YVPTVFDNF) match the Effector region motif. GTP is bound by residues 60–64 (DTAGQ) and 118–121 (TKLD). Cysteine methyl ester is present on cysteine 194. The S-geranylgeranyl cysteine moiety is linked to residue cysteine 194. A propeptide spans 195–197 (SIL) (removed in mature form).

This sequence belongs to the small GTPase superfamily. Rho family. Interacts with SPK1. In terms of tissue distribution, ubiquitous.

The protein localises to the cytoplasm. The protein resides in the membrane. Its function is as follows. Inactive GDP-bound Rho GTPases reside in the cytosol, are found in a complex with Rho GDP-dissociation inhibitors (Rho GDIs), and are released from the GDI protein in order to translocate to membranes upon activation. The chain is Rac-like GTP-binding protein ARAC1 (ARAC1) from Arabidopsis thaliana (Mouse-ear cress).